The chain runs to 270 residues: Glucosamine-6-phosphate deaminase (270 aa).

The active-site Proton acceptor; for enolization step is aspartate 72. Aspartate 141 (for ring-opening step) is an active-site residue. The active-site Proton acceptor; for ring-opening step is histidine 143. Residue glutamate 148 is the For ring-opening step of the active site.

Belongs to the glucosamine/galactosamine-6-phosphate isomerase family. NagB subfamily. Homohexamer.

The catalysed reaction is alpha-D-glucosamine 6-phosphate + H2O = beta-D-fructose 6-phosphate + NH4(+). The protein operates within amino-sugar metabolism; N-acetylneuraminate degradation; D-fructose 6-phosphate from N-acetylneuraminate: step 5/5. Allosterically activated by N-acetylglucosamine 6-phosphate (GlcNAc6P). Functionally, catalyzes the reversible isomerization-deamination of glucosamine 6-phosphate (GlcN6P) to form fructose 6-phosphate (Fru6P) and ammonium ion. This is Glucosamine-6-phosphate deaminase from Haemophilus influenzae (strain PittEE).